The following is a 575-amino-acid chain: Pre-hexon-linking protein IIIa (575 aa).

The interval 1-95 is peripentonal hexon-tethering domain; it reads MTSSDTFLAL…DLLNRAYTWN (95 aa). Residues 129-243 are binding to hexon-linking protein; that stretch reads ANASLLTQFF…FYDYGAMEPG (115 aa). At S497 the chain carries Phosphoserine; by host. A propeptide spanning residues 515–575 is cleaved from the precursor; that stretch reads GGPGFFASLR…SRRGRKLRFY (61 aa). A disordered region spans residues 525 to 549; that stretch reads PSIGSRQPTGTAVGLRPTTPYSGSG.

The protein belongs to the adenoviridae hexon-linking protein IIIa family. As to quaternary structure, interacts with hexon proteins; this interaction tethers the peripentonal hexons to hexons situated in the facet. Interacts with the penton protein (via N-terminus). Interacts with packaging protein 3; this interaction is required to promote correct genome packaging. In terms of processing, cleaved near the C-terminus by the viral protease during virion maturation to form the mature protein.

It localises to the virion. The protein localises to the host nucleus. Structural component of the virion that acts as a cement protein on the capsid exterior which mediates the interactions between the hexons, including the peripentonal hexons, and reaches all the way to the penton vertices. Two hexon linking proteins IIIa, one from each facet, stabilize the unique edge interface between a pair of facets. As the virus enters the host cell, hexon linking proteins IIIa are shed concomitant with virion acidification in the endosome. During virus assembly, seems to play a role in the serotype specificity of the packaging of viral DNA via its interaction with packaging protein 3. The polypeptide is Pre-hexon-linking protein IIIa (Galliformes (FAdV-1)).